The following is a 915-amino-acid chain: MANINLKEITLIVGVVTACYWNSLFCGFVFDDVSAILDNKDLHPSTPLKTLFQNDFWGTPMSEERSHKSYRPLTVLTFRLNYLLSELKPMSYHLLNMIFHAVVSVIFLKVCKLFLDNKSSVIASLLFAVHPIHTEAVTGVVGRAELLSSIFFLAAFLSYTRSKGPDNSIIWTPIALTVFLVAVATLCKEQGITVVGICCVYEVFIAQGYTLPLLCTTAGQFLRGKGSIPFSMLQTLVKLIVLMFSTLLLVVIRVQVIQSQLPVFTRFDNPAAVSPTPTRQLTFNYLLPVNAWLLLNPSELCCDWTMGTIPLIESLLDIRNLATFTFFCFLGMLGVFSIRYSGDSSKTVLMALCLMALPFIPASNLFFPVGFVVAERVLYVPSMGFCILVAHGWQKISTKSVFKKLSWICLSMVILTHSLKTFHRNWDWESEYTLFMSALKVNKNNAKLWNNVGHALENEKNFERALKYFLQATHVQPDDIGAHMNVGRTYKNLNRTKEAEESYMMAKSLMPQIIPGKKYAARIAPNHLNVYINLANLIRANESRLEEADQLYRQAISMRPDFKQAYISRGELLLKMNKPLKAKEAYLKALELDRNNADLWYNLAIVHIELKEPNEALKKNFNRALELNPKHKLALFNSAIVMQESGEVKLRPEARKRLLSYINEEPLDANGYFNLGMLAMDDKKDNEAEIWMKKAIKLQADFRSALFNLALLYSQTAKELKALPILEELLRYYPDHIKGLILKGDILMNQKKDILGAKKCFERILEMDPSNVQGKHNLCVVYFEEKDLLKAERCLLETLALAPHEEYIQRHLNIVRDKISSSSFIEPIFPTSKISSVEGKKIPTESVKEIRGESRQTQIVKTSDNKSQSKSNKQLGKNGDEETPHKTTKDIKEIEKKRVAALKRLEEIERILNGE.

Topologically, residues 1-8 (MANINLKE) are cytoplasmic. Residues 9–29 (ITLIVGVVTACYWNSLFCGFV) traverse the membrane as a helical segment. The Extracellular segment spans residues 30-93 (FDDVSAILDN…LSELKPMSYH (64 aa)). A helical membrane pass occupies residues 94–114 (LLNMIFHAVVSVIFLKVCKLF). Residues 115-120 (LDNKSS) lie on the Cytoplasmic side of the membrane. 2 consecutive transmembrane segments (helical) span residues 121 to 139 (VIAS…AVTG) and 140 to 158 (VVGR…AFLS). Residues 159–166 (YTRSKGPD) lie on the Cytoplasmic side of the membrane. A helical membrane pass occupies residues 167-187 (NSIIWTPIALTVFLVAVATLC). Residues 188–193 (KEQGIT) are Extracellular-facing. Residues 194–214 (VVGICCVYEVFIAQGYTLPLL) form a helical membrane-spanning segment. Residues 215–231 (CTTAGQFLRGKGSIPFS) are Cytoplasmic-facing. A helical membrane pass occupies residues 232 to 252 (MLQTLVKLIVLMFSTLLLVVI). Residues 253–317 (RVQVIQSQLP…TIPLIESLLD (65 aa)) lie on the Extracellular side of the membrane. Residues 318-338 (IRNLATFTFFCFLGMLGVFSI) form a helical membrane-spanning segment. Residues 339-353 (RYSGDSSKTVLMALC) lie on the Cytoplasmic side of the membrane. The chain crosses the membrane as a helical span at residues 354 to 374 (LMALPFIPASNLFFPVGFVVA). Residues 375–376 (ER) are Extracellular-facing. The helical transmembrane segment at 377-397 (VLYVPSMGFCILVAHGWQKIS) threads the bilayer. Residues 398–404 (TKSVFKK) are Cytoplasmic-facing. The chain crosses the membrane as a helical span at residues 405–423 (LSWICLSMVILTHSLKTFH). Residues 424–915 (RNWDWESEYT…EEIERILNGE (492 aa)) are Extracellular-facing. TPR repeat units follow at residues 446 to 479 (AKLW…QPDD), 480 to 513 (IGAH…MPQI), 529 to 562 (NVYI…RPDF), 563 to 596 (KQAY…DRNN), 597 to 631 (ADLW…NPKH), 669 to 702 (ANGY…QADF), 703 to 736 (RSAL…YPDH), 738 to 771 (KGLI…DPSN), and 772 to 805 (VQGK…APHE). The N-linked (GlcNAc...) asparagine glycan is linked to asparagine 494. Tyrosine 503 is subject to Phosphotyrosine. N-linked (GlcNAc...) asparagine glycosylation occurs at asparagine 541. A disordered region spans residues 848–892 (KEIRGESRQTQIVKTSDNKSQSKSNKQLGKNGDEETPHKTTKDIK). Asparagine 865 carries N-linked (GlcNAc...) asparagine glycosylation. Over residues 865–874 (NKSQSKSNKQ) the composition is skewed to low complexity. The span at 878–892 (NGDEETPHKTTKDIK) shows a compositional bias: basic and acidic residues.

The protein belongs to the TMTC family.

The protein localises to the membrane. The protein resides in the endoplasmic reticulum. It catalyses the reaction a di-trans,poly-cis-dolichyl beta-D-mannosyl phosphate + L-seryl-[protein] = 3-O-(alpha-D-mannosyl)-L-seryl-[protein] + a di-trans,poly-cis-dolichyl phosphate + H(+). It carries out the reaction a di-trans,poly-cis-dolichyl beta-D-mannosyl phosphate + L-threonyl-[protein] = 3-O-(alpha-D-mannosyl)-L-threonyl-[protein] + a di-trans,poly-cis-dolichyl phosphate + H(+). The protein operates within protein modification; protein glycosylation. In terms of biological role, transfers mannosyl residues to the hydroxyl group of serine or threonine residues. The 4 members of the TMTC family are O-mannosyl-transferases dedicated primarily to the cadherin superfamily, each member seems to have a distinct role in decorating the cadherin domains with O-linked mannose glycans at specific regions. Also acts as O-mannosyl-transferase on other proteins such as PDIA3. Involved in the positive regulation of proteasomal protein degradation in the endoplasmic reticulum (ER), and the control of ER stress response. The chain is Protein O-mannosyl-transferase TMTC3 from Homo sapiens (Human).